Here is a 135-residue protein sequence, read N- to C-terminus: Small ribosomal subunit protein uS11 (135 aa).

This sequence belongs to the universal ribosomal protein uS11 family. Part of the 30S ribosomal subunit. Interacts with proteins S7 and S18. Binds to IF-3.

Its function is as follows. Located on the platform of the 30S subunit, it bridges several disparate RNA helices of the 16S rRNA. Forms part of the Shine-Dalgarno cleft in the 70S ribosome. This chain is Small ribosomal subunit protein uS11, found in Polynucleobacter asymbioticus (strain DSM 18221 / CIP 109841 / QLW-P1DMWA-1) (Polynucleobacter necessarius subsp. asymbioticus).